The chain runs to 573 residues: Membrane protein insertase YidC (573 aa).

Transmembrane regions (helical) follow at residues 6–26 (VFLI…WGKD), 355–375 (FSIM…LHSF), 379–399 (WGWA…PLSA), 446–466 (GGCL…WVLV), 488–508 (PYFI…KLTP), and 524–544 (PLVF…YWVV).

Belongs to the OXA1/ALB3/YidC family. Type 1 subfamily. As to quaternary structure, interacts with the Sec translocase complex via SecD. Specifically interacts with transmembrane segments of nascent integral membrane proteins during membrane integration.

The protein resides in the cell inner membrane. Required for the insertion and/or proper folding and/or complex formation of integral membrane proteins into the membrane. Involved in integration of membrane proteins that insert both dependently and independently of the Sec translocase complex, as well as at least some lipoproteins. Aids folding of multispanning membrane proteins. This is Membrane protein insertase YidC from Xanthomonas campestris pv. campestris (strain ATCC 33913 / DSM 3586 / NCPPB 528 / LMG 568 / P 25).